The chain runs to 41 residues: Large ribosomal subunit protein bL36 (41 aa).

This sequence belongs to the bacterial ribosomal protein bL36 family.

This Sinorhizobium fredii (strain NBRC 101917 / NGR234) protein is Large ribosomal subunit protein bL36.